Here is a 233-residue protein sequence, read N- to C-terminus: Ycf53-like protein (233 aa).

It belongs to the ycf53 family.

The protein is Ycf53-like protein of Synechocystis sp. (strain ATCC 27184 / PCC 6803 / Kazusa).